We begin with the raw amino-acid sequence, 144 residues long: uncharacterized protein (144 aa).

The stretch at 23–82 (EELYKKLENNLRKIETSYLDSKHCQDFKRKIEYYKIVPLISETKEIIKVLIQKIETLEIK) forms a coiled coil.

This is an uncharacterized protein from Acanthamoeba polyphaga mimivirus (APMV).